Reading from the N-terminus, the 1495-residue chain is MTAYSGSPSKPGNNNSYLNRYVENLGTNVTPPLRPQSSSKINSSLNIASPSHLKTKTSASNSSATILSKKVESSVSKLKPSLPNKLVGKYTVDLSNYSKIELRYYEFLCRVSEVKIWIEAVIEEALPSEIELCVGDSLRNGVFLAKLTQRINPDLTTVIFPAGDKLQFKHTQNINAFFGLVEHVGVPDSFRFELQDLYNKKNIPQVFETLHILISMINKKWPGKTPALTNVSGQISFTKEEIAACKKAWPRIRDFKSLGTNINTAPASPEEPKEKRSGLIKDFNKFERPNIPVEEILITPRKNITDANCSDFSNTPSPYNEAPKMSNLDVVVEKRKFTPIEPSLLGPTPSLEYSPIKNKSLSYYSPTISKYLTYDTEFYTRRSRAREEDLNYYQTFKYSPSHYSPMRRERMTEEQFLEKVVQLQNICRGVNTRFNLYIQKRLLNLFEQDILRFQACLRGNKFRVLSSMYLPIRRAKIDVPHVEAIQSRIKGSRIRYKYDKLKFTLSRFSCTVELLQAYCRSKLLKTTVNTKLNDIEISHYPLTKLQSYMRASYVRKKVMSLNTKLNDERESIMKFSAIIRGNVVRCSEDAILSAVHDVHKENISKLQSLIRGIFTRSCLASIIYSLGKENCNIIQLSACIRGNAVRHKVQSLFAPENNLSETVHDLQGLVRGILVRYTLDLVDDIVEYNNLALFQAFSRGALVRESLDQKSSFYKRNVRSVIMIQSWIRKSLQRSAYLELLDCPNPSLWAVKKFVHLLNGTATIEEVQNQLESCQASLDSENMKKERLLKSIRQQLNINGVLDKFGLLKDKDHELGISDSTIPKSKYQKYEKLFYMLQVDPSYWKLLYLKEPEFVAKNVYMTFGTVNQRMNDRERSYFTRFVCEMLQNAINEAPSIESFLDNRSQFWQTILQDFLRRESPEFFSIIVPVLDYLSDPVVDFESDPYKIYQEIHGFSSPQHCSPVDDASTKNKFIDNLRCLWHAIEMVAEIYTRKVHTIPVEIRYLCTKIFCYAADKNIEEIDSLRAISSILVNVFVSEYLVNREYYGYKDSNVQKNNQKIDILMKSLATVFEIKNFDGFLDPLNQYANEIKPHIKDVLYNVLVDPEYEQEGDRLIYLDMVSPSPKLELLTEKVLEISGKFEEYLNEFPEADILHDILEKNLDNSSFPRSGRVTLELDASAYRFLVSDDKMRKIYDQVKRAFVYMMQIEDVDTNLYDLSISTILPQDEPNFANFLEQNPKIRDDPMIQKLKPLKYFTLKNVTLKKIHELESTGTFCSSDNKLQNFLNDIANTIKNPNYAIDYVTQEIYITKETLTKISEMNHSLDIELSRLKKHVDHTIKDFQKAKDFSPVHKSKFGNFKNAVKKVQGRERSELQGMKFKWNTKQLYERGVLKTIRGEKLAELTVKVFGSSGPKFPDIIFKISTSDGSRFGIQMIDKRKGPDKRYSDDVDSFSFKDLIKTQVEPKIETWKLFHSNVVVNNSQLLHLIVSFFYKRNAL.

A Calponin-homology (CH) domain is found at 108-221 (LCRVSEVKIW…ILISMINKKW (114 aa)). Thr264 is modified (phosphothreonine). Position 268 is a phosphoserine (Ser268). At Thr299 the chain carries Phosphothreonine. IQ domains follow at residues 447–467 (EQDILRFQACLRGNKFRVLSS), 538–567 (SHYPLTKLQSYMRASYVRKKVMSLNTKLND), 568–597 (ERESIMKFSAIIRGNVVRCSEDAILSAVHD), 599–628 (HKENISKLQSLIRGIFTRSCLASIIYSLGK), 629–658 (ENCNIIQLSACIRGNAVRHKVQSLFAPENN), 687–716 (EYNNLALFQAFSRGALVRESLDQKSSFYKR), and 717–746 (NVRSVIMIQSWIRKSLQRSAYLELLDCPNP). Positions 759 to 798 (NGTATIEEVQNQLESCQASLDSENMKKERLLKSIRQQLNI) form a coiled coil. A Ras-GAP domain is found at 876-1100 (SYFTRFVCEM…PHIKDVLYNV (225 aa)).

In terms of assembly, interacts with AFR1. Interacts with AKR1. Interacts with activated CDC42. Interacts with calmodulin CMD1. Interacts with myosin MYO1 and its light chain MLC1. Interacts with BUD4. Interacts with INN1. Interacts with SEC3. Interacts with TEM1.

It localises to the bud neck. Functionally, required for the assembly and the contraction of the actomyosin ring at the bud neck during cytokinesis. Seems to be involved in additional tasks during cell division like axial bud-site selection and targeted secretion by recruiting the spatial landmark BUD4, the septin CDC12 and the secretion landmark SEC3 to the bud neck. May be regulated by calcium ions. In Saccharomyces cerevisiae (strain ATCC 204508 / S288c) (Baker's yeast), this protein is Ras GTPase-activating-like protein IQG1 (IQG1).